Reading from the N-terminus, the 434-residue chain is MELHHPELTYAAIVALAAVLCGGMMTRLKQPAVVGYILAGVVLGPSGFGLVSNRDAVATLAEFGVLMLLFVIGMKLDIIRFLEVWKTAIFTTVLQIAGSVGTALLLRHGLGWSLGLAVVLGCAVAVSSTAVVIKVLESSDELDTPVGRTTLGILIAQDMAVVPMMLVLESFETKALLPADMARVVLSVLFLVLLFWWLSKRRIDLPITARLSRDSDLATLSTLAWCFGTAAISGVLDLSPAYGAFLGGVVLGNSAQRDMLLKRAQPIGSVLLMVFFLSIGLLLDFKFIWKNLGTVLTLLAMVTLFKTALNVTALRLARQDWPSAFLAGVALAQIGEFSFLLAETGKAVKLISAQETKLVVAVTVLSLVLSPFWLFTMRRMHRVAAVHVHSFRDLVTRLYGDEARAFARTARRARVLVRRGSWRDDPNAGPGSGI.

The next 10 membrane-spanning stretches (helical) occupy residues 6–26 (PELT…GMMT), 31–51 (PAVV…FGLV), 56–76 (AVAT…GMKL), 86–106 (KTAI…ALLL), 113–133 (SLGL…AVVI), 176–196 (LLPA…LLFW), 269–289 (SVLL…KFIW), 294–314 (TVLT…VTAL), 321–341 (WPSA…SFLL), and 357–377 (KLVV…LFTM).

Belongs to the monovalent cation:proton antiporter 2 (CPA2) transporter (TC 2.A.37) family.

It localises to the membrane. In terms of biological role, iron transporter, which is required for the synthesis of bacterial magnetic particles (BMPs). Probably involved in the transport of iron from the environment into the cytoplasm across the cell membrane, and then from the cytoplasm into the BMP lipid vesicle across the BMP membrane. This Paramagnetospirillum magneticum (strain ATCC 700264 / AMB-1) (Magnetospirillum magneticum) protein is Iron transporter MagA (magA).